The primary structure comprises 201 residues: 3-isopropylmalate dehydratase small subunit (201 aa).

Belongs to the LeuD family. LeuD type 1 subfamily. As to quaternary structure, heterodimer of LeuC and LeuD.

The enzyme catalyses (2R,3S)-3-isopropylmalate = (2S)-2-isopropylmalate. It functions in the pathway amino-acid biosynthesis; L-leucine biosynthesis; L-leucine from 3-methyl-2-oxobutanoate: step 2/4. Its function is as follows. Catalyzes the isomerization between 2-isopropylmalate and 3-isopropylmalate, via the formation of 2-isopropylmaleate. This chain is 3-isopropylmalate dehydratase small subunit, found in Mesorhizobium japonicum (strain LMG 29417 / CECT 9101 / MAFF 303099) (Mesorhizobium loti (strain MAFF 303099)).